The following is a 182-amino-acid chain: MEILLLAVALSMDCVALSMSNGAKCANYGIFRITKVSFVYGFFQGAMPIIGFFLGALFVGFIEQIDHFVAFAILGFLGVKMIFDSRENSDEITANLGLKELISGAVATSIDALAVGVTFSFTSLNIWFSCAIIAFVCFILSFAATFIGKKLGEIFKDKALILGGLILIFIGFKILITHLGIL.

The next 5 helical transmembrane spans lie at 3–23, 42–62, 65–85, 126–146, and 161–181; these read ILLLAVALSMDCVALSMSNGA, FFQGAMPIIGFFLGALFVGFI, IDHFVAFAILGFLGVKMIFDS, IWFSCAIIAFVCFILSFAATF, and ILGGLILIFIGFKILITHLGI.

Belongs to the MntP (TC 9.B.29) family.

It localises to the cell inner membrane. Its function is as follows. Probably functions as a manganese efflux pump. This is Putative manganese efflux pump MntP from Campylobacter hominis (strain ATCC BAA-381 / DSM 21671 / CCUG 45161 / LMG 19568 / NCTC 13146 / CH001A).